We begin with the raw amino-acid sequence, 246 residues long: Sugar fermentation stimulation protein homolog (246 aa).

Belongs to the SfsA family.

The chain is Sugar fermentation stimulation protein homolog from Prochlorococcus marinus (strain MIT 9312).